The sequence spans 437 residues: MLQIKGFRAALLGIFLLSLLGVQLNAKAEKQTVYVIPVEKNVEQGLASFLSRSLQDAKDAHADHIILDINTPGGLVKSAIDMADLITESEIPVTAYVNKRALSAGAYIALQADHIYMAPGGKMGAAAIVDGQGNAADQKAQSLWLAEMEDAAVKNNRDPKYALAMADPDIDAKEVGAPKGDLLTLNADKAIEVGYSEGTADNLSTLVKKLGFEKAQISYAKESFAEKTARWLTNPVIVPILLTIAFLGLTVELFSPGVGLPGTAGLIALLLFFYGHLAAGLAGYETVLLFIAGVILILLEIFLPGGIIGLLGLGAIIASLFLAAGSFTVMAVSLLIASAVSITAFILLTRVLGKRMKFFKKLILNDSTNTESGYVSNQTRTDLMGKVGITFTPLRPSGTVIIDDERLDVVSEGSFTEKDKKVKVIKVEGSRIVVREI.

5 consecutive transmembrane segments (helical) span residues 2 to 22 (LQIKGFRAALLGIFLLSLLGV), 231 to 251 (WLTNPVIVPILLTIAFLGLTV), 253 to 273 (LFSPGVGLPGTAGLIALLLFF), 288 to 308 (LLFIAGVILILLEIFLPGGII), and 316 to 336 (IIASLFLAAGSFTVMAVSLLI).

It belongs to the NfeD family.

The protein resides in the cell membrane. In Bacillus subtilis (strain 168), this protein is Membrane protein NfeD1b.